We begin with the raw amino-acid sequence, 575 residues long: E3 ubiquitin-protein ligase IpaH1.4 (575 aa).

Positions 1–270 are interaction with target proteins; that stretch reads MIKSTNIQAI…PDYSGPQIFF (270 aa). 8 LRR repeats span residues 69–90, 91–115, 117–130, 131–150, 151–170, 171–195, 197–209, and 210–233; these read LQNQEAELNLSELDLKTLPDLP, PQITTLEIRKNLLTHLPDLPPMLKV, HAQFNQLESLPALP, ETLEELNAGDNKIKELPFLP, ENLTHLRVHNNRLHILPLLP, PELKLLVVSGNRLDSIPPFPDKLEG, ALANNFIEQLPEL, and PFSMNRAVLMNNNLTTLPESVLRL. The linker stretch occupies residues 271–281; it reads SMGNSATISAP. The E3 ubiquitin-protein ligase catalytic domain stretch occupies residues 282 to 575; that stretch reads EHSLADAVTA…LSENGSNHIA (294 aa). In terms of domain architecture, NEL spans 284–575; the sequence is SLADAVTAWF…LSENGSNHIA (292 aa). The active-site Glycyl thioester intermediate is the Cys368.

The protein belongs to the LRR-containing bacterial E3 ligase family. Interacts with human RBCK1/HOIL-1 and RNF31/HOIP components of the LUBAC complex. Ubiquitinated in the presence of host E1 ubiquitin-activating enzyme, E2 ubiquitin-conjugating enzyme and ubiquitin.

The protein resides in the secreted. Its subcellular location is the host cytoplasm. It carries out the reaction S-ubiquitinyl-[E2 ubiquitin-conjugating enzyme]-L-cysteine + [acceptor protein]-L-lysine = [E2 ubiquitin-conjugating enzyme]-L-cysteine + N(6)-ubiquitinyl-[acceptor protein]-L-lysine.. Its pathway is protein modification; protein ubiquitination. Exists in an autoinhibited state in the absence of substrate protein, probably due to interactions of the leucine-rich repeat domain with the catalytic domain. Is activated upon binding to a substrate protein. Functionally, E3 ubiquitin-protein ligase effector that inhibits host cell innate immunity during bacterial infection by catalyzing 'Lys-48'-linked polyubiquitination and subsequent degradation of host RNF31/HOIP and RBCK1/HOIL-1. Host RNF31/HOIP is the catalytic component of the LUBAC complex, which conjugates linear ('Met-1'-linked) polyubiquitin chains at the surface of bacteria invading the host cytosol to form the ubiquitin coat surrounding bacteria. The bacterial ubiquitin coat acts as an 'eat-me' signal for xenophagy and promotes NF-kappa-B activation. By promoting degradation of host RNF31/HOIP, IpaH1.4 prevents formation of the bacterial ubiquitin coat and activation of host cell innate immunity. This is E3 ubiquitin-protein ligase IpaH1.4 from Shigella flexneri.